A 248-amino-acid chain; its full sequence is Small ribosomal subunit protein uS3 (248 aa).

Positions I38–K106 constitute a KH type-2 domain. A disordered region spans residues S214–G248. Residues R231 to A242 are compositionally biased toward basic residues.

Belongs to the universal ribosomal protein uS3 family. Part of the 30S ribosomal subunit. Forms a tight complex with proteins S10 and S14.

Its function is as follows. Binds the lower part of the 30S subunit head. Binds mRNA in the 70S ribosome, positioning it for translation. This chain is Small ribosomal subunit protein uS3, found in Corynebacterium aurimucosum (strain ATCC 700975 / DSM 44827 / CIP 107346 / CN-1) (Corynebacterium nigricans).